The following is a 632-amino-acid chain: Biosynthetic arginine decarboxylase (632 aa).

An N6-(pyridoxal phosphate)lysine modification is found at K101. 281–291 serves as a coordination point for substrate; it reads FDVGGGLGVDY.

The protein belongs to the Orn/Lys/Arg decarboxylase class-II family. SpeA subfamily. It depends on Mg(2+) as a cofactor. The cofactor is pyridoxal 5'-phosphate.

It catalyses the reaction L-arginine + H(+) = agmatine + CO2. It participates in amine and polyamine biosynthesis; agmatine biosynthesis; agmatine from L-arginine: step 1/1. Functionally, catalyzes the biosynthesis of agmatine from arginine. This Escherichia coli O157:H7 (strain EC4115 / EHEC) protein is Biosynthetic arginine decarboxylase.